Reading from the N-terminus, the 154-residue chain is Low molecular weight protein-tyrosine-phosphatase PtpA (154 aa).

The active-site Nucleophile is the Cys8. Residue Arg14 is part of the active site. Asp120 serves as the catalytic Proton donor.

The protein belongs to the low molecular weight phosphotyrosine protein phosphatase family.

It catalyses the reaction O-phospho-L-tyrosyl-[protein] + H2O = L-tyrosyl-[protein] + phosphate. Dephosphorylates the phosphotyrosine-containing proteins. This is Low molecular weight protein-tyrosine-phosphatase PtpA (ptpA) from Staphylococcus epidermidis (strain ATCC 35984 / DSM 28319 / BCRC 17069 / CCUG 31568 / BM 3577 / RP62A).